The sequence spans 940 residues: Inter-alpha-trypsin inhibitor heavy chain H5 (940 aa).

Positions 1–16 (MLLLLGLCLGLSQCVG) are cleaved as a signal peptide. The VIT domain maps to 35–161 (VPRQVRLLQR…KAAFFLSYEE (127 aa)). N-linked (GlcNAc...) asparagine glycosylation is found at asparagine 97 and asparagine 127. 2 disordered regions span residues 117 to 136 (KSGD…NGEK) and 208 to 227 (SRQR…PSTV). N-linked (GlcNAc...) asparagine glycosylation is present at asparagine 231. The VWFA domain maps to 295-478 (NVVFVLDSSA…SQLIGFYDEI (184 aa)). The disordered stretch occupies residues 405–432 (DGWEAHGRGDAHPQDPQQHPRGRPRPSL). Residues 407–417 (WEAHGRGDAHP) are compositionally biased toward basic and acidic residues. Asparagine 508 carries an N-linked (GlcNAc...) asparagine glycan. A disordered region spans residues 541–571 (PKTDVPVGPQKAGKDVTGSPRPGGDGERNPN). Residues asparagine 774, asparagine 793, and asparagine 860 are each glycosylated (N-linked (GlcNAc...) asparagine).

It belongs to the ITIH family.

The protein localises to the secreted. In terms of biological role, may act as a tumor suppressor. The protein is Inter-alpha-trypsin inhibitor heavy chain H5 (ITIH5) of Pongo abelii (Sumatran orangutan).